A 379-amino-acid polypeptide reads, in one-letter code: Cobalt-precorrin-5B C(1)-methyltransferase (379 aa).

The protein belongs to the CbiD family.

The enzyme catalyses Co-precorrin-5B + S-adenosyl-L-methionine = Co-precorrin-6A + S-adenosyl-L-homocysteine. It participates in cofactor biosynthesis; adenosylcobalamin biosynthesis; cob(II)yrinate a,c-diamide from sirohydrochlorin (anaerobic route): step 6/10. Its function is as follows. Catalyzes the methylation of C-1 in cobalt-precorrin-5B to form cobalt-precorrin-6A. This is Cobalt-precorrin-5B C(1)-methyltransferase from Salmonella heidelberg (strain SL476).